Reading from the N-terminus, the 164-residue chain is Putative HTH-type transcriptional regulator ORF2 (164 aa).

Residues 2-131 (RLTTKGRYAV…SGISLADLVA (130 aa)) enclose the HTH rrf2-type domain.

The sequence is that of Putative HTH-type transcriptional regulator ORF2 from Azotobacter vinelandii.